Consider the following 513-residue polypeptide: GTPase Obg (513 aa).

Positions Thr3–Leu160 constitute an Obg domain. An OBG-type G domain is found at Ala161–Ser337. GTP-binding positions include Gly167–Ser174, Phe192–Val196, Asp213–Gly216, Asn289–Asp292, and Ser318–Val320. The Mg(2+) site is built by Ser174 and Thr194. Residues Pro355 to Pro444 enclose the OCT domain. Residues Gly457 to Arg513 are disordered. The span at Ser458–Ala497 shows a compositional bias: basic and acidic residues. The segment covering Asp504 to Arg513 has biased composition (acidic residues).

Belongs to the TRAFAC class OBG-HflX-like GTPase superfamily. OBG GTPase family. In terms of assembly, monomer. Mg(2+) is required as a cofactor.

The protein resides in the cytoplasm. Functionally, an essential GTPase which binds GTP, GDP and possibly (p)ppGpp with moderate affinity, with high nucleotide exchange rates and a fairly low GTP hydrolysis rate. Plays a role in control of the cell cycle, stress response, ribosome biogenesis and in those bacteria that undergo differentiation, in morphogenesis control. This Kineococcus radiotolerans (strain ATCC BAA-149 / DSM 14245 / SRS30216) protein is GTPase Obg.